Consider the following 339-residue polypeptide: Glucokinase (339 aa).

16–21 (GDIGGT) contacts ATP.

It belongs to the bacterial glucokinase family.

The protein resides in the cytoplasm. The enzyme catalyses D-glucose + ATP = D-glucose 6-phosphate + ADP + H(+). In Sinorhizobium fredii (strain NBRC 101917 / NGR234), this protein is Glucokinase.